Reading from the N-terminus, the 49-residue chain is Large ribosomal subunit protein bL33B (49 aa).

The protein belongs to the bacterial ribosomal protein bL33 family.

The sequence is that of Large ribosomal subunit protein bL33B from Levilactobacillus brevis (strain ATCC 367 / BCRC 12310 / CIP 105137 / JCM 1170 / LMG 11437 / NCIMB 947 / NCTC 947) (Lactobacillus brevis).